The sequence spans 116 residues: NADH-ubiquinone oxidoreductase chain 3 (116 aa).

Transmembrane regions (helical) follow at residues 3-23 (LVISILAITIILSSILAVVSF), 56-76 (FFLVAILFLLFDLEIALLLAL), and 85-105 (ATGTFFWATAVLILLTLGLIY).

This sequence belongs to the complex I subunit 3 family.

It is found in the mitochondrion membrane. It catalyses the reaction a ubiquinone + NADH + 5 H(+)(in) = a ubiquinol + NAD(+) + 4 H(+)(out). Its function is as follows. Core subunit of the mitochondrial membrane respiratory chain NADH dehydrogenase (Complex I) that is believed to belong to the minimal assembly required for catalysis. Complex I functions in the transfer of electrons from NADH to the respiratory chain. The immediate electron acceptor for the enzyme is believed to be ubiquinone. This is NADH-ubiquinone oxidoreductase chain 3 (MT-ND3) from Formosania lacustris (Oriental stream loach).